Consider the following 292-residue polypeptide: tRNA pseudouridine synthase B (292 aa).

The active-site Nucleophile is the D40.

The protein belongs to the pseudouridine synthase TruB family. Type 1 subfamily.

It carries out the reaction uridine(55) in tRNA = pseudouridine(55) in tRNA. Functionally, responsible for synthesis of pseudouridine from uracil-55 in the psi GC loop of transfer RNAs. The protein is tRNA pseudouridine synthase B of Mycoplasma mycoides subsp. mycoides SC (strain CCUG 32753 / NCTC 10114 / PG1).